A 125-amino-acid polypeptide reads, in one-letter code: Calcitonin receptor-stimulating peptide 1 (125 aa).

Residues 1–25 (MGFWKFPPFLVLSILVLYQAGMFHA) form the signal peptide. Residues 26–77 (APFRSVFDGRFDPATLDEEESRLLLAAMVNDYEQMRARESEKAQKTEGSRIQ) constitute a propeptide that is removed on maturation. Cysteine 81 and cysteine 86 are joined by a disulfide.

Belongs to the calcitonin family.

The protein localises to the secreted. Functionally, stimulates cAMP production in porcine kidney cell line LLC-PK1 via the calcitonin receptor (CT) but not via the CT-like (CL) receptor. This is Calcitonin receptor-stimulating peptide 1 (CRSP1) from Bos taurus (Bovine).